We begin with the raw amino-acid sequence, 94 residues long: Small ribosomal subunit protein uS17 (94 aa).

It belongs to the universal ribosomal protein uS17 family. As to quaternary structure, part of the 30S ribosomal subunit.

One of the primary rRNA binding proteins, it binds specifically to the 5'-end of 16S ribosomal RNA. This Symbiobacterium thermophilum (strain DSM 24528 / JCM 14929 / IAM 14863 / T) protein is Small ribosomal subunit protein uS17.